The sequence spans 151 residues: Glycine and methionine-rich protein (151 aa).

An N-terminal signal peptide occupies residues 1 to 19 (MKTAVVLAAFSALMALARA).

Component of the acid-insoluble and acid-soluble organic matrix of calcified layers of the shell (at protein level).

Its subcellular location is the secreted. The sequence is that of Glycine and methionine-rich protein from Lottia gigantea (Giant owl limpet).